Consider the following 131-residue polypeptide: Large ribosomal subunit protein bL17 (131 aa).

The protein belongs to the bacterial ribosomal protein bL17 family. In terms of assembly, part of the 50S ribosomal subunit. Contacts protein L32.

The polypeptide is Large ribosomal subunit protein bL17 (Bordetella petrii (strain ATCC BAA-461 / DSM 12804 / CCUG 43448)).